Reading from the N-terminus, the 113-residue chain is U11-theraphotoxin-Hhn1h (113 aa).

An N-terminal signal peptide occupies residues 1-21 (MNTVRVTFLLVFVLVVSLGQA). Residues 22–74 (DKDENRMEMQEKTEQGKSYLDFAENLLLQKLEELEAKLLEEDSEESRNSRQKR) constitute a propeptide that is removed on maturation. The tract at residues 61 to 83 (EEDSEESRNSRQKRRIGEGVPCD) is disordered. Disulfide bonds link Cys82–Cys95 and Cys89–Cys110.

Belongs to the neurotoxin 14 (magi-1) family. 01 (HNTX-16) subfamily. In terms of tissue distribution, expressed by the venom gland.

It is found in the secreted. Probable ion channel inhibitor. The polypeptide is U11-theraphotoxin-Hhn1h (Cyriopagopus hainanus (Chinese bird spider)).